The primary structure comprises 250 residues: Putative inactive flavonol synthase 2 (250 aa).

The Fe2OG dioxygenase domain maps to 171 to 250; the sequence is TEYVMRINNY…EQWKVQECVA (80 aa). Fe cation-binding residues include His195 and Asp197.

The protein belongs to the iron/ascorbate-dependent oxidoreductase family.

This is Putative inactive flavonol synthase 2 (FLS2) from Arabidopsis thaliana (Mouse-ear cress).